The sequence spans 212 residues: Nucleoredoxin-like protein 1 (212 aa).

The 164-residue stretch at 1–164 folds into the Thioredoxin domain; the sequence is MASLFSGRIL…AAEVLDRNFQ (164 aa). Residues 191 to 212 form a disordered region; that stretch reads AARGGRDPGGGGGEEGGAGGLF. Over residues 197–212 the composition is skewed to gly residues; the sequence is DPGGGGGEEGGAGGLF.

Belongs to the nucleoredoxin family. Interacts with isoform 1 of BSG.

It localises to the cell projection. It is found in the cilium. The protein localises to the photoreceptor outer segment. Its function is as follows. Plays an important role in retinal cone photoreceptor survival. In association with glucose transporter SLC16A1/GLUT1 and BSG, promotes retinal cone survival by enhancing aerobic glycolysis and accelerating the entry of glucose into photoreceptors. May play a role in cone cell viability, slowing down cone degeneration, does not seem to play a role in degenerating rods. The protein is Nucleoredoxin-like protein 1 (NXNL1) of Homo sapiens (Human).